We begin with the raw amino-acid sequence, 150 residues long: MSTEVSNESPVTVDEAEFAALARYVLDQLHVHPQAELSILFVDIPAMSDLHERWMDEPGPTDVLSFPMDELRPGRDDAPSGPGVLGDVVLCPEVAAEQARTAGHSTEEELLLLTTHGILHLLGFDHAEPDEEREMFDLQRKLLLTFLAGR.

Positions 116, 120, and 126 each coordinate Zn(2+).

The protein belongs to the endoribonuclease YbeY family. The cofactor is Zn(2+).

Its subcellular location is the cytoplasm. Single strand-specific metallo-endoribonuclease involved in late-stage 70S ribosome quality control and in maturation of the 3' terminus of the 16S rRNA. This chain is Endoribonuclease YbeY, found in Beutenbergia cavernae (strain ATCC BAA-8 / DSM 12333 / CCUG 43141 / JCM 11478 / NBRC 16432 / NCIMB 13614 / HKI 0122).